A 336-amino-acid chain; its full sequence is Immune-associated nucleotide-binding protein 13 (336 aa).

The AIG1-type G domain maps to 15–221; sequence KPERTLVLLG…YMADLSHELR (207 aa). The segment at 24 to 31 is G1; sequence GRTGNGKS. GTP contacts are provided by residues 24-32 and S45; that span reads GRTGNGKSA. Residues 51-55 are G2; that stretch reads FITKE. A G3 region spans residues 73–76; sequence DTPG. Residues 143 to 146 are G4; that stretch reads TNED. The interval 179–181 is G5; it reads DNS. Residue N180 coordinates GTP. The stretch at 265–328 forms a coiled coil; the sequence is KEKISNQLKE…EKETASLRTE (64 aa).

Belongs to the TRAFAC class TrmE-Era-EngA-EngB-Septin-like GTPase superfamily. AIG1/Toc34/Toc159-like paraseptin GTPase family. IAN subfamily. In terms of tissue distribution, expressed in pollen grains.

The polypeptide is Immune-associated nucleotide-binding protein 13 (Arabidopsis thaliana (Mouse-ear cress)).